A 150-amino-acid chain; its full sequence is 1,4-dihydroxy-2-naphthoyl-CoA hydrolase (150 aa).

Aspartate 19 is an active-site residue.

The protein belongs to the 4-hydroxybenzoyl-CoA thioesterase family. DHNA-CoA hydrolase subfamily.

The enzyme catalyses 1,4-dihydroxy-2-naphthoyl-CoA + H2O = 1,4-dihydroxy-2-naphthoate + CoA + H(+). Its pathway is cofactor biosynthesis; phylloquinone biosynthesis. It functions in the pathway quinol/quinone metabolism; 1,4-dihydroxy-2-naphthoate biosynthesis; 1,4-dihydroxy-2-naphthoate from chorismate: step 7/7. In terms of biological role, catalyzes the hydrolysis of 1,4-dihydroxy-2-naphthoyl-CoA (DHNA-CoA) to 1,4-dihydroxy-2-naphthoate (DHNA), a reaction involved in phylloquinone (vitamin K1) biosynthesis. This Prochlorococcus marinus (strain AS9601) protein is 1,4-dihydroxy-2-naphthoyl-CoA hydrolase.